The primary structure comprises 140 residues: ATP synthase epsilon chain (140 aa).

It belongs to the ATPase epsilon chain family. In terms of assembly, F-type ATPases have 2 components, CF(1) - the catalytic core - and CF(0) - the membrane proton channel. CF(1) has five subunits: alpha(3), beta(3), gamma(1), delta(1), epsilon(1). CF(0) has three main subunits: a, b and c.

It localises to the cell inner membrane. In terms of biological role, produces ATP from ADP in the presence of a proton gradient across the membrane. The chain is ATP synthase epsilon chain from Laribacter hongkongensis (strain HLHK9).